A 58-amino-acid chain; its full sequence is Large ribosomal subunit protein uL30 (58 aa).

It belongs to the universal ribosomal protein uL30 family. As to quaternary structure, part of the 50S ribosomal subunit.

The polypeptide is Large ribosomal subunit protein uL30 (Azotobacter vinelandii (strain DJ / ATCC BAA-1303)).